A 197-amino-acid chain; its full sequence is Cyclin-dependent kinase inhibitor 1B (197 aa).

A compositionally biased stretch (polar residues) spans 1–11; it reads MSNVRVSNGSP. Residues 1–34 are disordered; sequence MSNVRVSNGSPSLERMDARQAEHPKPSACRNLFG. Phosphoserine; by UHMK1 is present on serine 10. The segment covering 14 to 25 has biased composition (basic and acidic residues); it reads ERMDARQAEHPK. The segment at 51 to 91 is interaction with CDK2; that stretch reads DMEEASQRKWNFDFQNHKPLEGRYEWQEVERGSLPEFYYRP. At tyrosine 74 the chain carries Phosphotyrosine; by SRC. Residues 86–197 form a disordered region; that stretch reads EFYYRPPRPP…PKKPGLRRQT (112 aa). Tyrosine 88 is modified (phosphotyrosine; by ABL, LYN, SRC and JAK2). Tyrosine 89 carries the phosphotyrosine modification. Positions 104–113 are enriched in polar residues; that stretch reads QESQDVSGSR. The short motif at 153–169 is the Nuclear localization signal element; the sequence is KRPAAEDSSSQNKRANR. Residue threonine 170 is modified to Phosphothreonine; by CaMK1. Over residues 175 to 186 the composition is skewed to polar residues; sequence SDGSPNAGTVEQ. Threonine 187 carries the post-translational modification Phosphothreonine; by PKB/AKT1, CDK1 and CDK2. A Phosphothreonine; by CaMK1, PKB/AKT1, RPS6KA1, RPS6KA3 and PIM1 modification is found at threonine 197.

The protein belongs to the CDI family. Forms a ternary complex composed of CCNE1, CDK2 and CDKN1B. Interacts directly with CCNE1; the interaction is inhibited by CDK2-dependent phosphorylation on Thr-187. Interacts with COPS5, subunit of the COP9 signalosome complex; the interaction leads to CDKN1B degradation. Interacts with NUP50; the interaction leads to nuclear import and degradation of phosphorylated CDKN1B. Interacts with CCND1 and SNX6. Interacts (Thr-197-phosphorylated form) with 14-3-3 proteins, binds strongly YWHAQ, weakly YWHAE and YWHAH, but not YWHAB nor YWHAZ; the interaction with YWHAQ results in translocation to the cytoplasm. Interacts with AKT1 and LYN; the interactions lead to cytoplasmic mislocation, phosphorylation of CDKN1B and inhibition of cell cycle arrest. Forms a ternary complex with CCNA2 and CDK2; CDKN1B inhibits the kinase activity of CDK2 through conformational rearrangements. Interacts (unphosphorylated form) with CDK2. Forms a complex with CDK2 and SPDYA, but does not directly interact with SPDYA. Forms a ternary complex composed of cyclin D, CDK4 and CDKN1B. Interacts (phosphorylated on Tyr-88 and Tyr-89) with CDK4; the interaction is required for cyclin D and CDK4 complex assembly, induces nuclear translocation and activates the CDK4 kinase activity. Interacts with GRB2. Interacts with PIM1. Identified in a complex with SKP1, SKP2 and CKS1B. Interacts with UHMK1; the interaction leads to cytoplasmic mislocation, phosphorylation of CDKN1B and inhibition of cell cycle arrest. Also interacts with CDK1. Dephosphorylated on Thr-187 by PPM1H, leading to CDKN1B stability. Phosphorylated; phosphorylation occurs on serine, threonine and tyrosine residues. Phosphorylation on Ser-10 is the major site of phosphorylation in resting cells, takes place at the G(0)-G(1) phase and leads to protein stability. Phosphorylation on other sites is greatly enhanced by mitogens, growth factors, MYC and in certain cancer cell lines. The phosphorylated form found in the cytoplasm is inactivate. Phosphorylation on Thr-197 is required for interaction with 14-3-3 proteins. Phosphorylation on Thr-187, by CDK1 and CDK2 leads to protein ubiquitination and proteasomal degradation. Tyrosine phosphorylation promotes this process. Phosphorylation by PKB/AKT1 can be suppressed by LY294002, an inhibitor of the catalytic subunit of PI3K. Phosphorylation on Tyr-88 and Tyr-89 has no effect on binding CDK2, but is required for binding CDK4. Dephosphorylated on tyrosine residues by G-CSF. Dephosphorylated on Thr-187 by PPM1H, leading to CDKN1B stability. In terms of processing, ubiquitinated; in the cytoplasm by the KPC complex (composed of RNF123/KPC1 and UBAC1/KPC2) and, in the nucleus, by SCF(SKP2). The latter requires prior phosphorylation on Thr-187. Ubiquitinated; by a TRIM21-containing SCF(SKP2)-like complex; leads to its degradation. Post-translationally, subject to degradation in the lysosome. Interaction with SNX6 promotes lysosomal degradation.

It is found in the nucleus. It localises to the cytoplasm. Its subcellular location is the endosome. Its function is as follows. Important regulator of cell cycle progression. Inhibits the kinase activity of CDK2 bound to cyclin A, but has little inhibitory activity on CDK2 bound to SPDYA. Involved in G1 arrest. Potent inhibitor of cyclin E- and cyclin A-CDK2 complexes. Forms a complex with cyclin type D-CDK4 complexes and is involved in the assembly, stability, and modulation of CCND1-CDK4 complex activation. Acts either as an inhibitor or an activator of cyclin type D-CDK4 complexes depending on its phosphorylation state and/or stoichometry. The chain is Cyclin-dependent kinase inhibitor 1B (Cdkn1b) from Mus musculus (Mouse).